The sequence spans 484 residues: 3-isopropylmalate dehydratase large subunit (484 aa).

Residues Cys-352, Cys-412, and Cys-415 each coordinate [4Fe-4S] cluster. The segment at 462–484 is disordered; the sequence is GTLSSPSDLDPAPESAAVSSSAA.

It belongs to the aconitase/IPM isomerase family. LeuC type 1 subfamily. As to quaternary structure, heterodimer of LeuC and LeuD. [4Fe-4S] cluster is required as a cofactor.

It carries out the reaction (2R,3S)-3-isopropylmalate = (2S)-2-isopropylmalate. Its pathway is amino-acid biosynthesis; L-leucine biosynthesis; L-leucine from 3-methyl-2-oxobutanoate: step 2/4. In terms of biological role, catalyzes the isomerization between 2-isopropylmalate and 3-isopropylmalate, via the formation of 2-isopropylmaleate. This chain is 3-isopropylmalate dehydratase large subunit, found in Arthrobacter sp. (strain FB24).